The sequence spans 1567 residues: Transmembrane protein 131 homolog (1567 aa).

The first 32 residues, 1–32, serve as a signal peptide directing secretion; sequence MPTQVQMRPLLRIFAEPILLILIFLFTLGAKG. The Lumenal segment spans residues 33–1049; that stretch reads EKVLQETFLG…RPGWESSLKN (1017 aa). The tract at residues 55-228 is papD-L domain; sequence RLVPSRLDFG…TLKPVIRISF (174 aa). 13 N-linked (GlcNAc...) asparagine glycosylation sites follow: N84, N114, N168, N235, N316, N317, N342, N372, N409, N462, N563, N890, and N1013. Residues 1050–1070 form a helical membrane-spanning segment; the sequence is AALVVLLASFGLVLVAAVFDA. Residues 1071 to 1567 lie on the Cytoplasmic side of the membrane; that stretch reads KAIMVQQNAY…SQRNNHNHMN (497 aa). Residues 1096 to 1130 adopt a coiled-coil conformation; sequence RNIVKLQAEEAAAKAESVQQQQKVKNGQLKELRKR. 3 disordered regions span residues 1112 to 1337, 1364 to 1386, and 1502 to 1567; these read SVQQ…SPDA, PTDN…IGDN, and PGLE…NHMN. Composition is skewed to low complexity over residues 1132–1150 and 1166–1183; these read VVNS…SPWS and KTVV…APAA. Residues S1201 and S1258 each carry the phosphoserine modification. Polar residues predominate over residues 1247 to 1259; the sequence is AKSSPPQQENISP. The segment covering 1284-1298 has biased composition (basic and acidic residues); that stretch reads PGRERERERRSKDQK. Polar residues predominate over residues 1319 to 1331; that stretch reads KLNFGQTTNSTSP. Composition is skewed to polar residues over residues 1507–1519 and 1536–1561; these read SARQ…QEQV and LPTQ…SQRN.

The protein belongs to the TMEM131 family. In terms of assembly, may interact (via PapD-L domain) with collagen proteins (via C-terminus); the interaction is direct and is involved in assembly and TRAPPIII ER-to-Golgi transport complex-dependent secretion of collagen.

The protein localises to the membrane. In terms of biological role, collagen binding transmembrane protein involved in collagen secretion, probably by recruiting the ER-to-Golgi transport complex TRAPPIII. In Drosophila melanogaster (Fruit fly), this protein is Transmembrane protein 131 homolog.